A 282-amino-acid polypeptide reads, in one-letter code: Putative 4-diphosphocytidyl-2-C-methyl-D-erythritol kinase (282 aa).

Lysine 9 is a catalytic residue. 93–103 contacts ATP; that stretch reads PVSAGLAGGSA. Aspartate 135 is a catalytic residue.

It belongs to the GHMP kinase family. IspE subfamily.

It catalyses the reaction 4-CDP-2-C-methyl-D-erythritol + ATP = 4-CDP-2-C-methyl-D-erythritol 2-phosphate + ADP + H(+). In terms of biological role, catalyzes the phosphorylation of the position 2 hydroxy group of 4-diphosphocytidyl-2C-methyl-D-erythritol. This is Putative 4-diphosphocytidyl-2-C-methyl-D-erythritol kinase from Staphylococcus aureus (strain MSSA476).